A 157-amino-acid polypeptide reads, in one-letter code: Lipoprotein signal peptidase (157 aa).

A run of 4 helical transmembrane segments spans residues 10–30, 36–56, 58–78, and 84–104; these read LVFI…KHAI, YESL…FSLL, FLEG…FIFL, and LFKN…SNVL. Active-site residues include Asp-114 and Asp-131. The chain crosses the membrane as a helical span at residues 122 to 142; sequence FDFAIFNFADVMIDVGVGVLL.

It belongs to the peptidase A8 family.

It is found in the cell inner membrane. The catalysed reaction is Release of signal peptides from bacterial membrane prolipoproteins. Hydrolyzes -Xaa-Yaa-Zaa-|-(S,diacylglyceryl)Cys-, in which Xaa is hydrophobic (preferably Leu), and Yaa (Ala or Ser) and Zaa (Gly or Ala) have small, neutral side chains.. The protein operates within protein modification; lipoprotein biosynthesis (signal peptide cleavage). This protein specifically catalyzes the removal of signal peptides from prolipoproteins. This is Lipoprotein signal peptidase from Helicobacter pylori (strain P12).